The chain runs to 98 residues: Class II hydrophobin 1 (98 aa).

Positions 1–16 (MQFFTTVVLFAAAAMA) are cleaved as a signal peptide. 4 disulfides stabilise this stretch: C29-C79, C39-C70, C40-C52, and C80-C92.

It belongs to the cerato-ulmin hydrophobin family. As to quaternary structure, homodimer. Homodimers further self-assemble to form highly ordered films at water-air interfaces through intermolecular interactions. As to expression, expressed in mycelium, conidiating mycelium and aerial hyphae.

The protein resides in the secreted. The protein localises to the cell wall. Functionally, aerial growth, conidiation, and dispersal of filamentous fungi in the environment rely upon a capability of their secreting small amphipathic proteins called hydrophobins (HPBs) with low sequence identity. Class I can self-assemble into an outermost layer of rodlet bundles on aerial cell surfaces, conferring cellular hydrophobicity that supports fungal growth, development and dispersal; whereas Class II form highly ordered films at water-air interfaces through intermolecular interactions but contribute nothing to the rodlet structure. Hyd1 is a class II hydrophobin that plays probably a role during conidiophore development and in intraspecific signaling or hyphal fusion. Hyd1 and Hyd3 are jointly required for conidial hydrophobicity and dispersal, but seem not to be involved in mycelia hydrophobicity. Inhibits conidial germination in environments not suitable for mycelial growth. Not necessary for root adhesion and colonization. The chain is Class II hydrophobin 1 from Bionectria ochroleuca (Gliocladium roseum).